The chain runs to 347 residues: 4-hydroxy-2-oxovalerate aldolase 1 (347 aa).

In terms of domain architecture, Pyruvate carboxyltransferase spans 8–261; the sequence is VTLYDMSLLX…ETGIDLYKIM (254 aa). H20 serves as the catalytic Proton acceptor. S171 and H200 together coordinate substrate. Mn(2+) contacts are provided by H200 and H202. Y291 lines the substrate pocket.

It belongs to the 4-hydroxy-2-oxovalerate aldolase family.

It carries out the reaction (S)-4-hydroxy-2-oxopentanoate = acetaldehyde + pyruvate. This Metapseudomonas furukawaii (Pseudomonas furukawaii) protein is 4-hydroxy-2-oxovalerate aldolase 1 (salH).